A 487-amino-acid chain; its full sequence is Solute carrier family 22 member 15-like (487 aa).

A helical transmembrane segment spans residues alanine 22–glycine 42. N-linked (GlcNAc...) asparagine glycosylation is present at asparagine 70. 11 helical membrane-spanning segments follow: residues leucine 90 to serine 110, proline 117 to proline 137, valine 141 to phenylalanine 161, serine 178 to isoleucine 198, threonine 203 to proline 223, isoleucine 286 to alanine 306, leucine 315 to isoleucine 335, alanine 345 to glutamate 365, threonine 374 to tyrosine 394, alanine 406 to proline 426, and methionine 435 to proline 455.

It belongs to the major facilitator (TC 2.A.1) superfamily. Organic cation transporter (TC 2.A.1.19) family.

It localises to the membrane. In terms of biological role, probably transports organic cations. This chain is Solute carrier family 22 member 15-like (slc22a15b), found in Xenopus tropicalis (Western clawed frog).